The sequence spans 438 residues: MAEDVSSTAPSPRGCADGRDADPTEEQMAQTQRNDQDQFECQELLECQVQVGAPDEEEEEEEDSGLVAEAEAVAAGWMLHFLCLSLCRAFRDGRSEDFRRTRNSAEAIIHGLSSLTACQLRTIYICQFLTRIAAGKTLDAQFENDERITPLESALMIWGSIEKEHDKLHEEIQNLIKIPAIAVCMENGNFKEAEEVFERIFGDPNSHMPFKSKLLMIISQKDTFHSFFQHFSYYHMMEKIKSYVNYVLSEKSSTFLMKAAAKVVESKRTRTITSQDKPSGNDVEMETEANLDTRKSVSDKQSAVTESSEGTVSLLRSHKNLFLSKLQHGTQQQDLNKKERRVGTPQSTKKKKESRRATESRIPVSKSQPVTPEKHRARKRQAWLWEEDKNLRSGVRKYGEGNWSKILLHYKFNNRTSVMLKDRWRTMKKLKLISSDSE.

Positions M1 to P10 are enriched in polar residues. The disordered stretch occupies residues M1–Q36. Residue A2 is modified to N-acetylalanine. Position 11 is a phosphoserine (S11). The segment at E58–R268 is TRFH dimerization. K213 participates in a covalent cross-link: Glycyl lysine isopeptide (Lys-Gly) (interchain with G-Cter in SUMO2). Phosphoserine; by ATM is present on S219. The interaction with RLIM stretch occupies residues E265–R378. The segment at R268–T311 is disordered. The span at D299–T311 shows a compositional bias: polar residues. A Glycyl lysine isopeptide (Lys-Gly) (interchain with G-Cter in SUMO2) cross-link involves residue K325. The interval L326 to H375 is disordered. A Nuclear localization signal motif is present at residues K337–R356. Residue K366 forms a Glycyl lysine isopeptide (Lys-Gly) (interchain with G-Cter in SUMO2) linkage. Residues H375–L432 enclose the HTH myb-type domain. The H-T-H motif DNA-binding region spans W403–K428.

In terms of assembly, homodimer; can contain both isoforms. Found in a complex with POT1; TINF2 and TNKS1. Interacts with ATM, TINF2, TNKS1, TNKS2, PINX1, NEK2 and MAPRE1. Component of the shelterin complex (telosome) composed of TERF1, TERF2, TINF2, TERF2IP ACD and POT1. Interacts with RLIM (via N-terminus). Interacts with FBXO4. Interaction with TINF2 protects against interaction with FBXO4 and subsequent polyubiquitination and proteasomal degradation. Interacts with GNL3L; this interaction promotes homodimerization. Interacts with TIN2. Interactions with GNL3L and TIN2 are mutually exclusive. Interacts with RTEL1. Interacts with CCDC79/TERB1. Post-translationally, phosphorylated preferentially on Ser-219 in an ATM-dependent manner in response to ionizing DNA damage. In terms of processing, ADP-ribosylation by TNKS1 or TNKS2 diminishes its ability to bind to telomeric DNA. Ubiquitinated by RLIM/RNF12, leading to its degradation by the proteasome. Ubiquitinated by a SCF (SKP1-CUL1-F-box protein) ubiquitin-protein ligase complex, leading to its degradation by the proteasome.

Its subcellular location is the nucleus. The protein resides in the chromosome. It localises to the telomere. The protein localises to the cytoplasm. It is found in the cytoskeleton. Its subcellular location is the spindle. In terms of biological role, binds the telomeric double-stranded 5'-TTAGGG-3' repeat and negatively regulates telomere length. Involved in the regulation of the mitotic spindle. Component of the shelterin complex (telosome) that is involved in the regulation of telomere length and protection. Shelterin associates with arrays of double-stranded 5'-TTAGGG-3' repeats added by telomerase and protects chromosome ends; without its protective activity, telomeres are no longer hidden from the DNA damage surveillance and chromosome ends are inappropriately processed by DNA repair pathways. The chain is Telomeric repeat-binding factor 1 (TERF1) from Cricetulus griseus (Chinese hamster).